A 361-amino-acid polypeptide reads, in one-letter code: Peptide chain release factor 1 (361 aa).

Glutamine 235 carries the N5-methylglutamine modification.

It belongs to the prokaryotic/mitochondrial release factor family. In terms of processing, methylated by PrmC. Methylation increases the termination efficiency of RF1.

The protein localises to the cytoplasm. In terms of biological role, peptide chain release factor 1 directs the termination of translation in response to the peptide chain termination codons UAG and UAA. The sequence is that of Peptide chain release factor 1 from Azoarcus sp. (strain BH72).